The primary structure comprises 372 residues: N-methyl-L-tryptophan oxidase (372 aa).

4–34 serves as a coordination point for FAD; the sequence is DLIIIGSGSVGAAAGYYATRAGLNVLMTDAH. S-8alpha-FAD cysteine is present on Cys-308.

Belongs to the MSOX/MTOX family. MTOX subfamily. As to quaternary structure, monomer. FAD serves as cofactor.

The catalysed reaction is N(alpha)-methyl-L-tryptophan + O2 + H2O = L-tryptophan + formaldehyde + H2O2. Its function is as follows. Catalyzes the oxidative demethylation of N-methyl-L-tryptophan. The polypeptide is N-methyl-L-tryptophan oxidase (Escherichia coli O1:K1 / APEC).